Here is a 239-residue protein sequence, read N- to C-terminus: Peptidyl-tRNA hydrolase (239 aa).

Tyr-14 contacts tRNA. His-19 acts as the Proton acceptor in catalysis. TRNA contacts are provided by Phe-64, Asn-66, and Asn-112. A disordered region spans residues 188-239 (APPRSSTSKPKAQDNREDAAQAAEERSETRTPPEARPEDTRSALQKLADKFR). Basic and acidic residues predominate over residues 198 to 239 (KAQDNREDAAQAAEERSETRTPPEARPEDTRSALQKLADKFR).

The protein belongs to the PTH family. As to quaternary structure, monomer.

It localises to the cytoplasm. It catalyses the reaction an N-acyl-L-alpha-aminoacyl-tRNA + H2O = an N-acyl-L-amino acid + a tRNA + H(+). Hydrolyzes ribosome-free peptidyl-tRNAs (with 1 or more amino acids incorporated), which drop off the ribosome during protein synthesis, or as a result of ribosome stalling. In terms of biological role, catalyzes the release of premature peptidyl moieties from peptidyl-tRNA molecules trapped in stalled 50S ribosomal subunits, and thus maintains levels of free tRNAs and 50S ribosomes. The sequence is that of Peptidyl-tRNA hydrolase from Jannaschia sp. (strain CCS1).